Reading from the N-terminus, the 126-residue chain is Large ribosomal subunit protein bL12 (126 aa).

It belongs to the bacterial ribosomal protein bL12 family. Homodimer. Part of the ribosomal stalk of the 50S ribosomal subunit. Forms a multimeric L10(L12)X complex, where L10 forms an elongated spine to which 2 to 4 L12 dimers bind in a sequential fashion. Binds GTP-bound translation factors.

Functionally, forms part of the ribosomal stalk which helps the ribosome interact with GTP-bound translation factors. Is thus essential for accurate translation. In Chlorobium phaeobacteroides (strain BS1), this protein is Large ribosomal subunit protein bL12.